The following is a 287-amino-acid chain: Heterodimeric geranylgeranyl pyrophosphate synthase small subunit 2, chloroplastic (287 aa).

The Mg(2+) site is built by E103 and D109. 3 residues coordinate dimethylallyl diphosphate: K204, Q241, and K250.

This sequence belongs to the FPP/GGPP synthase family. As to quaternary structure, part of a heterodimeric geranyl(geranyl)diphosphate synthase. The cofactor is Mg(2+). Mainly expressed in trichomes, and, to a lower extent, in roots, leaves, flowers and stems.

It localises to the plastid. The protein resides in the chloroplast thylakoid membrane. In terms of biological role, heterodimeric geranyl(geranyl)-diphosphate (GPP) synthase small subunit. The small subunit alone is inactive in vitro while the large subunit GGPPS1 catalyzes mainly the production of geranygeranyl-diphosphate in vitro. Upon association of the two subunits, the product profile changes and the production of gerany-diphosphate is strongly increased. The chain is Heterodimeric geranylgeranyl pyrophosphate synthase small subunit 2, chloroplastic from Cannabis sativa (Hemp).